The sequence spans 165 residues: Endoribonuclease YbeY (165 aa).

Residues histidine 131, histidine 135, and histidine 141 each contribute to the Zn(2+) site.

Belongs to the endoribonuclease YbeY family. It depends on Zn(2+) as a cofactor.

It is found in the cytoplasm. Single strand-specific metallo-endoribonuclease involved in late-stage 70S ribosome quality control and in maturation of the 3' terminus of the 16S rRNA. The sequence is that of Endoribonuclease YbeY from Lachnoclostridium phytofermentans (strain ATCC 700394 / DSM 18823 / ISDg) (Clostridium phytofermentans).